Consider the following 533-residue polypeptide: Calcineurin-interacting protein 3 (533 aa).

3 disordered regions span residues 1 to 30 (MRSL…NMDI), 53 to 85 (PRKQ…YTKR), and 359 to 404 (MDMS…LTLP). The span at 61 to 85 (KRAEPVSEEHRKKESSKNSREYTKR) shows a compositional bias: basic and acidic residues. The segment covering 359-372 (MDMSQTLSPEQTLS) has biased composition (polar residues). A compositionally biased stretch (basic and acidic residues) spans 373–384 (PREKLQVQDRKI).

Its subcellular location is the nucleus. The sequence is that of Calcineurin-interacting protein 3 from Caenorhabditis elegans.